Consider the following 322-residue polypeptide: Phosphatidylserine decarboxylase proenzyme (322 aa).

Residues Asp-90, His-147, and Ser-254 each act as charge relay system; for autoendoproteolytic cleavage activity in the active site. The Schiff-base intermediate with substrate; via pyruvic acid; for decarboxylase activity role is filled by Ser-254. The residue at position 254 (Ser-254) is a Pyruvic acid (Ser); by autocatalysis. The tract at residues 293–322 (PDAEPAPLPAEEIEAEHDASPLVDDKKDQV) is disordered. Basic and acidic residues predominate over residues 308 to 322 (EHDASPLVDDKKDQV).

It belongs to the phosphatidylserine decarboxylase family. PSD-B subfamily. Prokaryotic type I sub-subfamily. Heterodimer of a large membrane-associated beta subunit and a small pyruvoyl-containing alpha subunit. Requires pyruvate as cofactor. Post-translationally, is synthesized initially as an inactive proenzyme. Formation of the active enzyme involves a self-maturation process in which the active site pyruvoyl group is generated from an internal serine residue via an autocatalytic post-translational modification. Two non-identical subunits are generated from the proenzyme in this reaction, and the pyruvate is formed at the N-terminus of the alpha chain, which is derived from the carboxyl end of the proenzyme. The autoendoproteolytic cleavage occurs by a canonical serine protease mechanism, in which the side chain hydroxyl group of the serine supplies its oxygen atom to form the C-terminus of the beta chain, while the remainder of the serine residue undergoes an oxidative deamination to produce ammonia and the pyruvoyl prosthetic group on the alpha chain. During this reaction, the Ser that is part of the protease active site of the proenzyme becomes the pyruvoyl prosthetic group, which constitutes an essential element of the active site of the mature decarboxylase.

It localises to the cell membrane. The catalysed reaction is a 1,2-diacyl-sn-glycero-3-phospho-L-serine + H(+) = a 1,2-diacyl-sn-glycero-3-phosphoethanolamine + CO2. The protein operates within phospholipid metabolism; phosphatidylethanolamine biosynthesis; phosphatidylethanolamine from CDP-diacylglycerol: step 2/2. In terms of biological role, catalyzes the formation of phosphatidylethanolamine (PtdEtn) from phosphatidylserine (PtdSer). In Escherichia coli O45:K1 (strain S88 / ExPEC), this protein is Phosphatidylserine decarboxylase proenzyme.